Here is a 149-residue protein sequence, read N- to C-terminus: Large ribosomal subunit protein uL15 (149 aa).

Composition is skewed to basic residues over residues 1 to 14 (MPTH…HRGH) and 21 to 30 (RVGKHRKHPG). A disordered region spans residues 1–42 (MPTHLSKTRKHRGHVSAGHGRVGKHRKHPGGRGLAGGQHHHR).

It belongs to the universal ribosomal protein uL15 family.

The sequence is that of Large ribosomal subunit protein uL15 from Blumeria hordei (Barley powdery mildew).